Here is a 185-residue protein sequence, read N- to C-terminus: Ribosome-recycling factor (185 aa).

This sequence belongs to the RRF family.

The protein localises to the cytoplasm. Responsible for the release of ribosomes from messenger RNA at the termination of protein biosynthesis. May increase the efficiency of translation by recycling ribosomes from one round of translation to another. This chain is Ribosome-recycling factor, found in Halalkalibacterium halodurans (strain ATCC BAA-125 / DSM 18197 / FERM 7344 / JCM 9153 / C-125) (Bacillus halodurans).